Consider the following 311-residue polypeptide: Probable manganese-dependent inorganic pyrophosphatase (311 aa).

The Mn(2+) site is built by His-9, Asp-13, Asp-15, Asp-77, His-99, and Asp-151.

Belongs to the PPase class C family. Requires Mn(2+) as cofactor.

The protein localises to the cytoplasm. It catalyses the reaction diphosphate + H2O = 2 phosphate + H(+). This is Probable manganese-dependent inorganic pyrophosphatase from Streptococcus agalactiae serotype Ia (strain ATCC 27591 / A909 / CDC SS700).